The following is a 354-amino-acid chain: Uroporphyrinogen decarboxylase (354 aa).

Residues 27–31 (RQAGR), Asp-77, Tyr-154, Thr-209, and His-327 each bind substrate.

The protein belongs to the uroporphyrinogen decarboxylase family. As to quaternary structure, homodimer.

Its subcellular location is the cytoplasm. It catalyses the reaction uroporphyrinogen III + 4 H(+) = coproporphyrinogen III + 4 CO2. It participates in porphyrin-containing compound metabolism; protoporphyrin-IX biosynthesis; coproporphyrinogen-III from 5-aminolevulinate: step 4/4. Its function is as follows. Catalyzes the decarboxylation of four acetate groups of uroporphyrinogen-III to yield coproporphyrinogen-III. This chain is Uroporphyrinogen decarboxylase, found in Actinobacillus succinogenes (strain ATCC 55618 / DSM 22257 / CCUG 43843 / 130Z).